A 341-amino-acid polypeptide reads, in one-letter code: Arfaptin-2 (341 aa).

A disordered region spans residues 46–84; that stretch reads NETSIVSGGYGGSGDGLIPTGSGRHPSHSTSPSGPGDEV. Residues 65-81 are compositionally biased toward low complexity; the sequence is TGSGRHPSHSTSPSGPG. Position 72 is a phosphoserine (serine 72). In terms of domain architecture, AH spans 121–321; that stretch reads TVDLELELQI…NQKQLEQTLQ (201 aa).

In terms of assembly, forms homodimers or heterodimers with ARFIP1. Interacts with RAC1. Specifically binds to GTP-bound ARF1 and ARF6, but binds to RAC1.GTP and RAC1.GDP with similar affinities. Interacts with ARL1. Interacts (via N-terminus) with IKBKB and IKBKG; these interactions inhibit activation of NF-kappa-B.

The protein localises to the golgi apparatus. The protein resides in the trans-Golgi network membrane. Plays a role in constitutive metalloproteinase (MMP) secretion from the trans Golgi network. May have important functions during vesicle biogenesis at certain cargo subdomains, which could be predominantly utilized by secreted MMPs, such as MMP7 and MMP2. Also involved in autophagy by regulating the starvation-dependent trafficking of ATG9A vesicles which deliver the phosphatidylinositol 4-kinase beta (PI4KB) to the autophagosome initiation site. Involved in phagophore growth during mitophagy by regulating ATG9A trafficking to mitochondria. In addition, plays a role in NF-kappa-B inhibition by interacting with IKBKB and IKBKG. The polypeptide is Arfaptin-2 (Mus musculus (Mouse)).